A 554-amino-acid polypeptide reads, in one-letter code: RecBCD enzyme subunit RecD (554 aa).

Position 155 to 162 (155 to 162 (GGPGTGKT)) interacts with ATP.

It belongs to the RecD family. Heterotrimer of RecB, RecC and RecD. All subunits contribute to DNA-binding.

It catalyses the reaction Couples ATP hydrolysis with the unwinding of duplex DNA at the replication fork by translocating in the 5'-3' direction. This creates two antiparallel DNA single strands (ssDNA). The leading ssDNA polymer is the template for DNA polymerase III holoenzyme which synthesizes a continuous strand.. It carries out the reaction ATP + H2O = ADP + phosphate + H(+). A helicase/nuclease that prepares dsDNA breaks (DSB) for recombinational DNA repair. Binds to DSBs and unwinds DNA via a highly rapid and processive ATP-dependent bidirectional helicase activity. Holoenzyme degrades any linearized DNA that is unable to undergo homologous recombination. In the holoenzyme this subunit has ssDNA-dependent ATPase and 5'-3' helicase activity. When added to pre-assembled RecBC greatly stimulates nuclease activity and augments holoenzyme processivity. Unlike the case in E.coli, suppresses RecA-dependent homologous recombination, is instead required for single-strand annealing pathway repair of DSB. This is RecBCD enzyme subunit RecD from Mycolicibacterium smegmatis (strain ATCC 700084 / mc(2)155) (Mycobacterium smegmatis).